Reading from the N-terminus, the 938-residue chain is Protein translocase subunit SecA (938 aa).

ATP contacts are provided by residues Gln90, Gly108–Thr112, and Asp504.

Belongs to the SecA family. As to quaternary structure, monomer and homodimer. Part of the essential Sec protein translocation apparatus which comprises SecA, SecYEG and auxiliary proteins SecDF. Other proteins may also be involved.

Its subcellular location is the cell inner membrane. It is found in the cellular thylakoid membrane. The protein resides in the cytoplasm. It carries out the reaction ATP + H2O + cellular proteinSide 1 = ADP + phosphate + cellular proteinSide 2.. Its function is as follows. Part of the Sec protein translocase complex. Interacts with the SecYEG preprotein conducting channel. Has a central role in coupling the hydrolysis of ATP to the transfer of proteins into and across the cell membrane, serving as an ATP-driven molecular motor driving the stepwise translocation of polypeptide chains across the membrane. In terms of biological role, probably participates in protein translocation into and across both the cytoplasmic and thylakoid membranes in cyanobacterial cells. The polypeptide is Protein translocase subunit SecA (Microcystis aeruginosa (strain NIES-843 / IAM M-2473)).